The sequence spans 854 residues: Probable inorganic carbon transporter subunit DabA (854 aa).

The Zn(2+) site is built by Cys-378, Asp-380, His-560, and Cys-575.

It belongs to the inorganic carbon transporter (TC 9.A.2) DabA family. In terms of assembly, forms a complex with DabB. Zn(2+) serves as cofactor.

Its subcellular location is the cell membrane. In terms of biological role, part of an energy-coupled inorganic carbon pump. The sequence is that of Probable inorganic carbon transporter subunit DabA from Bacillus cereus (strain ATCC 14579 / DSM 31 / CCUG 7414 / JCM 2152 / NBRC 15305 / NCIMB 9373 / NCTC 2599 / NRRL B-3711).